We begin with the raw amino-acid sequence, 599 residues long: Elongation factor 4 (599 aa).

The tr-type G domain maps to 2–184; it reads KNIRNFSIIA…RLVRDIPPPE (183 aa). Residues 14-19 and 131-134 contribute to the GTP site; these read DHGKST and NKID.

This sequence belongs to the TRAFAC class translation factor GTPase superfamily. Classic translation factor GTPase family. LepA subfamily.

Its subcellular location is the cell inner membrane. It carries out the reaction GTP + H2O = GDP + phosphate + H(+). Functionally, required for accurate and efficient protein synthesis under certain stress conditions. May act as a fidelity factor of the translation reaction, by catalyzing a one-codon backward translocation of tRNAs on improperly translocated ribosomes. Back-translocation proceeds from a post-translocation (POST) complex to a pre-translocation (PRE) complex, thus giving elongation factor G a second chance to translocate the tRNAs correctly. Binds to ribosomes in a GTP-dependent manner. The protein is Elongation factor 4 of Citrobacter koseri (strain ATCC BAA-895 / CDC 4225-83 / SGSC4696).